Reading from the N-terminus, the 116-residue chain is Movement protein TGB2 (116 aa).

Over 1 to 11 (MPLTPPPNPQK) the chain is Cytoplasmic. The helical transmembrane segment at 12–32 (TYQIAILALGLVLLAFVLISD) threads the bilayer. Topologically, residues 33–77 (HSPKVGDHLHNLPFGGEYKDGTKSIKYFQRPNQHSLSKTLAKSHN) are lumenal. Residues 78 to 98 (TTIFLLILGLIVTLHGLHYFN) form a helical membrane-spanning segment. The Cytoplasmic portion of the chain corresponds to 99–116 (NNRRVSSSLHCVLCQNKH).

The protein belongs to the Tymovirales TGBp2 protein family.

The protein localises to the host endoplasmic reticulum membrane. In terms of biological role, plays a role in viral cell-to-cell propagation, by facilitating genome transport to neighboring plant cells through plasmosdesmata,. The polypeptide is Movement protein TGB2 (White clover mosaic virus (strain M) (WCMV)).